The following is a 197-amino-acid chain: Probable deoxycytidylate deaminase (197 aa).

Residues 49-183 (KKHQRFLRIA…KMLDHARLPY (135 aa)) enclose the CMP/dCMP-type deaminase domain. H117 serves as a coordination point for Zn(2+). The Proton donor role is filled by E119. Positions 143 and 146 each coordinate Zn(2+).

The protein belongs to the cytidine and deoxycytidylate deaminase family. The cofactor is Zn(2+).

It carries out the reaction dCMP + H2O + H(+) = dUMP + NH4(+). Supplies the nucleotide substrate for thymidylate synthetase. This is Probable deoxycytidylate deaminase from Caenorhabditis elegans.